The chain runs to 485 residues: Pup--protein ligase (485 aa).

Glu-33 serves as a coordination point for Mg(2+). Residue Arg-76 participates in ATP binding. Tyr-78 lines the Mg(2+) pocket. Asp-80 functions as the Proton acceptor in the catalytic mechanism. Position 86 (Glu-86) interacts with Mg(2+). ATP contacts are provided by Thr-89 and Trp-451.

The protein belongs to the Pup ligase/Pup deamidase family. Pup-conjugating enzyme subfamily.

It catalyses the reaction ATP + [prokaryotic ubiquitin-like protein]-L-glutamate + [protein]-L-lysine = ADP + phosphate + N(6)-([prokaryotic ubiquitin-like protein]-gamma-L-glutamyl)-[protein]-L-lysine.. It participates in protein degradation; proteasomal Pup-dependent pathway. It functions in the pathway protein modification; protein pupylation. In terms of biological role, catalyzes the covalent attachment of the prokaryotic ubiquitin-like protein modifier Pup to the proteasomal substrate proteins, thereby targeting them for proteasomal degradation. This tagging system is termed pupylation. The ligation reaction involves the side-chain carboxylate of the C-terminal glutamate of Pup and the side-chain amino group of a substrate lysine. The polypeptide is Pup--protein ligase (Bifidobacterium longum subsp. infantis (strain ATCC 15697 / DSM 20088 / JCM 1222 / NCTC 11817 / S12)).